A 336-amino-acid polypeptide reads, in one-letter code: UDP-3-O-acylglucosamine N-acyltransferase (336 aa).

The active-site Proton acceptor is histidine 236.

This sequence belongs to the transferase hexapeptide repeat family. LpxD subfamily. As to quaternary structure, homotrimer.

The catalysed reaction is a UDP-3-O-[(3R)-3-hydroxyacyl]-alpha-D-glucosamine + a (3R)-hydroxyacyl-[ACP] = a UDP-2-N,3-O-bis[(3R)-3-hydroxyacyl]-alpha-D-glucosamine + holo-[ACP] + H(+). It functions in the pathway bacterial outer membrane biogenesis; LPS lipid A biosynthesis. In terms of biological role, catalyzes the N-acylation of UDP-3-O-acylglucosamine using 3-hydroxyacyl-ACP as the acyl donor. Is involved in the biosynthesis of lipid A, a phosphorylated glycolipid that anchors the lipopolysaccharide to the outer membrane of the cell. This is UDP-3-O-acylglucosamine N-acyltransferase from Aromatoleum aromaticum (strain DSM 19018 / LMG 30748 / EbN1) (Azoarcus sp. (strain EbN1)).